The chain runs to 407 residues: METYETSIGTQSYPPTLFPPPLGTGGFTTSGYIHALVDSTSNSNSNSNSNSNTNSNTNSNSDTKIPIVQISDDSHITHDSFKPYMEYHDASHLRNRNISKADQVDSTEVMEQFTQWSNYKMRSRSPTINAKPIRHTSQRRTDFTSKNELSKFSKNHNFIFHKGFLKRQHSIRREDRQAKVRSRFRSKKELTSVLNYIELEQMDIANVLASQSVNLHAIRNLTSRDPAVTPIPFLRSQMYATSSRPPYLRNRSIRRKLPKSQPGSLPTTTPATATKTIKQNSTTPTTRSVYNKNVGRSNTSPSVLYHPKRRGKLNTKSHARKEQLLLELWREYLMLVITQRTQLRLTLLCSPGSASNESSVCSSNASDLDMSLLSTPSSLFQMAGETKSNPIIIPDSQDDSILSSDPF.

Over residues 40 to 61 (TSNSNSNSNSNSNTNSNTNSNS) the composition is skewed to low complexity. Disordered stretches follow at residues 40–64 (TSNS…SDTK) and 251–315 (RSIR…KLNT). Ser-260 and Ser-264 each carry phosphoserine. Residues 266 to 276 (PTTTPATATKT) are compositionally biased toward low complexity. Residues 277 to 302 (IKQNSTTPTTRSVYNKNVGRSNTSPS) are compositionally biased toward polar residues. Phosphoserine is present on residues Ser-300 and Ser-302. The segment covering 306–315 (HPKRRGKLNT) has biased composition (basic residues). The short motif at 391–398 (IIIPDSQD) is the SUMO-binding element.

In terms of assembly, interacts with CBF2, GIS1, NAP1, PRM8, REI1, SHS1 and SMT3.

The protein resides in the bud neck. It localises to the cytoplasm. The protein localises to the cell cortex. Functionally, may be involved in a mitotic signaling network. Binds sumoylated proteins and may stabilize SUMO chains. This chain is Protein NIS1 (NIS1), found in Saccharomyces cerevisiae (strain YJM789) (Baker's yeast).